Here is a 248-residue protein sequence, read N- to C-terminus: Small ribosomal subunit protein uS2 (248 aa).

It belongs to the universal ribosomal protein uS2 family.

This Alkalilimnicola ehrlichii (strain ATCC BAA-1101 / DSM 17681 / MLHE-1) protein is Small ribosomal subunit protein uS2.